The following is a 642-amino-acid chain: Threonine--tRNA ligase (642 aa).

The region spanning 1-61 (MPVITLPDGS…ETDSTLSIIT (61 aa)) is the TGS domain. Positions 243–534 (DHRKIGKQLD…LTEEFAGFFP (292 aa)) are catalytic. The Zn(2+) site is built by cysteine 334, histidine 385, and histidine 511.

Belongs to the class-II aminoacyl-tRNA synthetase family. As to quaternary structure, homodimer. The cofactor is Zn(2+).

It localises to the cytoplasm. The catalysed reaction is tRNA(Thr) + L-threonine + ATP = L-threonyl-tRNA(Thr) + AMP + diphosphate + H(+). Catalyzes the attachment of threonine to tRNA(Thr) in a two-step reaction: L-threonine is first activated by ATP to form Thr-AMP and then transferred to the acceptor end of tRNA(Thr). Also edits incorrectly charged L-seryl-tRNA(Thr). In Klebsiella pneumoniae (strain 342), this protein is Threonine--tRNA ligase.